The sequence spans 444 residues: Phosphoglucosamine mutase (444 aa).

The Phosphoserine intermediate role is filled by S102. Residues S102, D241, D243, and D245 each coordinate Mg(2+). S102 is subject to Phosphoserine.

The protein belongs to the phosphohexose mutase family. Mg(2+) is required as a cofactor. Activated by phosphorylation.

The enzyme catalyses alpha-D-glucosamine 1-phosphate = D-glucosamine 6-phosphate. Catalyzes the conversion of glucosamine-6-phosphate to glucosamine-1-phosphate. The chain is Phosphoglucosamine mutase from Buchnera aphidicola subsp. Acyrthosiphon pisum (strain 5A).